A 150-amino-acid polypeptide reads, in one-letter code: MGRFIFVSFGLLVVFLSLSGTAADCPPDWSSYEGSCYRVFEQKMNWEDAEKFCTQQQTGGHLVSFQSSEEADFVVSLTSPILRDSFVWTGLSDVWKECSFEWSDGSDLSYKDNYQFVFSEYECVASKTKNNKWRIIPCTKLEYFVCEFQA.

A signal peptide spans 1–23 (MGRFIFVSFGLLVVFLSLSGTAA). Cystine bridges form between cysteine 25-cysteine 36, cysteine 53-cysteine 146, and cysteine 123-cysteine 138. One can recognise a C-type lectin domain in the interval 32–147 (YEGSCYRVFE…CTKLEYFVCE (116 aa)).

This sequence belongs to the snaclec family. In terms of assembly, heterodimer of subunits alpha and beta; disulfide-linked. Expressed by the venom gland.

It is found in the secreted. Functionally, this potent antithrombotic agent acts in a calcium-independent manner. Exerts its anticoagulant effect by two distinct mechanisms. It binds to activated thrombin through exosite 1, blocking fibrinogen clotting, platelet activation, factor V activation and other effects, and it interacts with prothrombin (F2), decreasing its proteolytic activation -especially in the presence of factor Va. In vivo, intravenous injection before thrombosis induction causes a significant decrease in thrombus weight. Furthermore, BJC shows a prolonged effect by remaining in the plasma bound to prothrombin for at least 12 hours. The polypeptide is Snaclec bothrojaracin subunit beta (Bothrops jararaca (Jararaca)).